The following is a 222-amino-acid chain: DnaJ homolog subfamily B member 9 (222 aa).

Positions 1–23 (MATPQSVFVFAICILMITELILA) are cleaved as a signal peptide. The 65-residue stretch at 26–90 (SYYDILGVPK…HRRKEYDTVG (65 aa)) folds into the J domain. The divergent targeting domain stretch occupies residues 91-222 (HTAFTNGKGQ…VTTYTDCSGQ (132 aa)). Residue Ser-133 is modified to Phosphoserine.

Interacts with HSPA5/BiP; interaction is direct. Interacts with ERN1/IRE1 (via the luminal region). Interacts with DERL1.

Its subcellular location is the endoplasmic reticulum lumen. Functionally, co-chaperone for Hsp70 protein HSPA5/BiP that acts as a key repressor of the ERN1/IRE1-mediated unfolded protein response (UPR). J domain-containing co-chaperones stimulate the ATPase activity of Hsp70 proteins and are required for efficient substrate recognition by Hsp70 proteins. In the unstressed endoplasmic reticulum, interacts with the luminal region of ERN1/IRE1 and selectively recruits HSPA5/BiP: HSPA5/BiP disrupts the dimerization of the active ERN1/IRE1 luminal region, thereby inactivating ERN1/IRE1. Also involved in endoplasmic reticulum-associated degradation (ERAD) of misfolded proteins. Required for survival of B-cell progenitors and normal antibody production. The sequence is that of DnaJ homolog subfamily B member 9 from Cricetulus griseus (Chinese hamster).